The following is a 394-amino-acid chain: Endothelial cell-selective adhesion molecule (394 aa).

A signal peptide spans 1–29 (MILPARTPETSLLRVLFLGLSTLAAFSLA). At 30–251 (QMELHVPPGL…LDVMTGSKAA (222 aa)) the chain is on the extracellular side. The region spanning 37 to 146 (PGLNKLEAVE…DGKNIGHSIK (110 aa)) is the Ig-like V-type domain. Residues Asn111, Asn172, Asn216, and Asn239 are each glycosylated (N-linked (GlcNAc...) asparagine). Residues 156 to 243 (PAPPSCSFQG…GFAQCNVTLD (88 aa)) enclose the Ig-like C2-type domain. Cys177 and Cys227 form a disulfide bridge. The chain crosses the membrane as a helical span at residues 252–272 (VVAGAVVGTFVGLVLIAGLVL). Topologically, residues 273 to 394 (LYQRRSKTLE…PAQSQAGSLV (122 aa)) are cytoplasmic. The segment at 300–372 (WTKGSDTISK…SLTPGGVSSS (73 aa)) is disordered. Composition is skewed to polar residues over residues 303–318 (GSDT…SVTS) and 335–347 (FTPT…QALS). Ser304 carries the phosphoserine modification. 2 positions are modified to phosphothreonine: Thr336 and Thr338. Ser340, Ser343, and Ser348 each carry phosphoserine.

Interacts with MAGI1.

It is found in the cell junction. The protein resides in the adherens junction. It localises to the tight junction. The protein localises to the cell membrane. Functionally, can mediate aggregation most likely through a homophilic molecular interaction. This Rattus norvegicus (Rat) protein is Endothelial cell-selective adhesion molecule (Esam).